Here is a 468-residue protein sequence, read N- to C-terminus: TFIIA-alpha and beta-like factor (468 aa).

2 disordered regions span residues 215–236 (DRRLLPGNELRPQESSPYLSLP) and 379–416 (DSVSNEDSTANSSDNEDHQINAPEEDPLNSGDDVSEQD). A compositionally biased stretch (polar residues) spans 380–391 (SVSNEDSTANSS). Residues 401–416 (PEEDPLNSGDDVSEQD) are compositionally biased toward acidic residues.

Belongs to the TFIIA subunit 1 family. As to expression, testis specific. Expressed in pachytene spermatocytes and haploid spermatids.

The protein resides in the nucleus. Its function is as follows. May function as a testis specific transcription factor. Binds DNA in conjunction with GTF2A2 and TBP (the TATA-binding protein) and together with GTF2A2, allows mRNA transcription. This is TFIIA-alpha and beta-like factor (Gtf2a1l) from Mus musculus (Mouse).